Here is a 164-residue protein sequence, read N- to C-terminus: Transcription elongation factor GreA (164 aa).

Residues 50-75 (YHAAREEQGQQEARIRQLQDLLNIAK) are a coiled coil.

This sequence belongs to the GreA/GreB family.

Necessary for efficient RNA polymerase transcription elongation past template-encoded arresting sites. The arresting sites in DNA have the property of trapping a certain fraction of elongating RNA polymerases that pass through, resulting in locked ternary complexes. Cleavage of the nascent transcript by cleavage factors such as GreA or GreB allows the resumption of elongation from the new 3'terminus. GreA releases sequences of 2 to 3 nucleotides. This is Transcription elongation factor GreA from Mycobacterium leprae (strain Br4923).